We begin with the raw amino-acid sequence, 1151 residues long: UDP-N-acetylglucosamine--peptide N-acetylglucosaminyltransferase (1151 aa).

TPR repeat units follow at residues 125-158, 193-226, 227-260, 261-294, 295-328, 329-362, 363-396, 397-430, 431-464, 465-498, 499-532, and 533-566; these read LKKVTELAHRQFQSGNYVEAEKYCNLVFQSDPNN, AEAYSNLGNYYKEKGQLQDALENYKLAVKLKPEF, IDAYINLAAALVSGGDLEQAVTAYFNALQINPDL, YCVRSDLGNLLKAMGRLEEAKVCYLKAIETQPQF, AVAWSNLGCVFNSQGEIWLAIHHFEKAVTLDPNF, LDAYINLGNVLKEARIFDRAVSAYLRALNLSGNH, AVVHGNLACVYYEQGLIDLAIDTYKKAIDLQPHF, PDAYCNLANALKEKGSVVEAEQMYMKALELCPTH, ADSQNNLANIKREQGKIEDATRLYLKALEIYPEF, AAAHSNLASILQQQGKLNDAILHYKEAIRIAPTF, ADAYSNMGNTLKEMGDSSAAIACYNRAIQINPAF, and ADAHSNLASIHKDAGNMAEAIQSYSTALKLKPDF. One copy of the TPR 13; truncated repeat lies at 567–577; sequence PDAYCNLAHCH. The Nuclear localization signal signature appears at 591–607; it reads RKLVQIVEDQLCKKRLP. The active-site Proton acceptor is His-612. UDP-binding positions include Gln-954, Lys-957, 1010–1013, 1016–1019, 1034–1036, and Asp-1040; these read VAAK, HVRR, and GHT.

This sequence belongs to the glycosyltransferase 41 family. O-GlcNAc transferase subfamily.

Its subcellular location is the nucleus. It is found in the cytoplasm. It localises to the perinuclear region. It carries out the reaction L-seryl-[protein] + UDP-N-acetyl-alpha-D-glucosamine = 3-O-(N-acetyl-beta-D-glucosaminyl)-L-seryl-[protein] + UDP + H(+). The enzyme catalyses L-threonyl-[protein] + UDP-N-acetyl-alpha-D-glucosamine = 3-O-(N-acetyl-beta-D-glucosaminyl)-L-threonyl-[protein] + UDP + H(+). Its pathway is protein modification; protein glycosylation. Addition of nucleotide-activated sugars directly onto the polypeptide through O-glycosidic linkage with the hydroxyl of serine or threonine. Influences tap habituation in the mechanosensory neurons cell autonomously. The protein is UDP-N-acetylglucosamine--peptide N-acetylglucosaminyltransferase (ogt-1) of Caenorhabditis elegans.